A 349-amino-acid polypeptide reads, in one-letter code: Zinc-type alcohol dehydrogenase-like protein PB24D3.08c (349 aa).

Belongs to the zinc-containing alcohol dehydrogenase family. Quinone oxidoreductase subfamily.

Its subcellular location is the cytoplasm. It localises to the nucleus. The chain is Zinc-type alcohol dehydrogenase-like protein PB24D3.08c from Schizosaccharomyces pombe (strain 972 / ATCC 24843) (Fission yeast).